The sequence spans 221 residues: NEP1-interacting protein-like 1 (221 aa).

Helical transmembrane passes span 35 to 55 (LFTF…GALI), 69 to 89 (VGAI…LLLW), and 95 to 115 (GIGC…GRLV). The RING-type; atypical zinc finger occupies 176–218 (CSVCLQDFQVGETVRSLPHCHHMFHLPCIDKWLRRHASCPLCR).

The protein belongs to the RING-type zinc finger family. NIP subfamily.

The protein localises to the membrane. In terms of biological role, may be involved in the early steps of the plant defense signaling pathway. The chain is NEP1-interacting protein-like 1 (ATL27) from Arabidopsis thaliana (Mouse-ear cress).